The following is a 351-amino-acid chain: Nicotinate-nucleotide--dimethylbenzimidazole phosphoribosyltransferase (351 aa).

The active-site Proton acceptor is Glu319.

The protein belongs to the CobT family.

The enzyme catalyses 5,6-dimethylbenzimidazole + nicotinate beta-D-ribonucleotide = alpha-ribazole 5'-phosphate + nicotinate + H(+). It functions in the pathway nucleoside biosynthesis; alpha-ribazole biosynthesis; alpha-ribazole from 5,6-dimethylbenzimidazole: step 1/2. Catalyzes the synthesis of alpha-ribazole-5'-phosphate from nicotinate mononucleotide (NAMN) and 5,6-dimethylbenzimidazole (DMB). This is Nicotinate-nucleotide--dimethylbenzimidazole phosphoribosyltransferase from Desulforamulus reducens (strain ATCC BAA-1160 / DSM 100696 / MI-1) (Desulfotomaculum reducens).